Here is a 291-residue protein sequence, read N- to C-terminus: Flavin-dependent thymidylate synthase (291 aa).

The ThyX domain occupies 31-241 (GFVRVVDYMG…PMVHAAFVEY (211 aa)). FAD is bound by residues Ser-77, 100–102 (RHR), and Glu-108. DUMP-binding positions include 97-100 (QWVR), 108-112 (EYSAR), and Arg-180. A ThyX motif motif is present at residues 100 to 110 (RHRTASINEYS). Residue 196-198 (NLH) participates in FAD binding. Residue Arg-207 participates in dUMP binding. Catalysis depends on Arg-207, which acts as the Involved in ionization of N3 of dUMP, leading to its activation.

Belongs to the thymidylate synthase ThyX family. As to quaternary structure, homotetramer. The cofactor is FAD.

The enzyme catalyses dUMP + (6R)-5,10-methylene-5,6,7,8-tetrahydrofolate + NADPH + H(+) = dTMP + (6S)-5,6,7,8-tetrahydrofolate + NADP(+). The protein operates within pyrimidine metabolism; dTTP biosynthesis. In terms of biological role, catalyzes the reductive methylation of 2'-deoxyuridine-5'-monophosphate (dUMP) to 2'-deoxythymidine-5'-monophosphate (dTMP) while utilizing 5,10-methylenetetrahydrofolate (mTHF) as the methyl donor, and NADPH and FADH(2) as the reductant. In Anaplasma marginale (strain St. Maries), this protein is Flavin-dependent thymidylate synthase.